Reading from the N-terminus, the 500-residue chain is MFISEAIGPEDRFDAVLIGAGIMSSTLAVLLHELDPCMRILIVERLDSPALESTSAFNNSGTGHAANCEFNYTPLQSNGRIEIEKALSINSSFERSLEFWASLAEMGRISPATFLNFLPHISFVWKEADLDFLKQRYLQLSSEVAFQRMEWSDDKAELKEWMPIVMQGRPTSEKVAATRIQRGTDVDFGALTRAYFDSLEESGSVHIRLSTEVIDIQRFGQDPWKLFLKSDLNSYCVEGKFVFLGAGGGALSLLQKSGIPEGKFYGGFPVSGQWLVCNETQVTNNHNAKVYGNADVGSPPMSVPHLDTRWIRGRKSLLFGPFAGFNTKFLKYGSNWDLFRSIQMGNVGAMVQAGLENIDLIKYLYGQLQQDHISRVDSLQNFLPNAKSKDWHLSLAGQRVQIIKKTSKGGKLKMGTEMVSSSDGSLAALLGASPGASTAVAIMIDLLRSSWGEKMSTKIWQDRLRRLIPSFGEDLNSNESMLKATRDRNDSLLGFGEKNQ.

It belongs to the MQO family. FAD serves as cofactor.

It catalyses the reaction (S)-malate + a quinone = a quinol + oxaloacetate. It functions in the pathway carbohydrate metabolism; tricarboxylic acid cycle; oxaloacetate from (S)-malate (quinone route): step 1/1. The polypeptide is Probable malate:quinone oxidoreductase (Prochlorococcus marinus (strain MIT 9211)).